Reading from the N-terminus, the 296-residue chain is 3-methyl-2-oxobutanoate hydroxymethyltransferase (296 aa).

Positions 1 to 33 (MDASDTPTHPAPHPADPAATPYGAPTTPPRPLR) are disordered. Low complexity predominate over residues 16–25 (DPAATPYGAP). The Mg(2+) site is built by Asp77 and Asp116. 3-methyl-2-oxobutanoate contacts are provided by residues 77–78 (DS), Asp116, and Lys146. Glu148 serves as a coordination point for Mg(2+). Glu214 acts as the Proton acceptor in catalysis.

It belongs to the PanB family. As to quaternary structure, homodecamer; pentamer of dimers. The cofactor is Mg(2+).

Its subcellular location is the cytoplasm. It carries out the reaction 3-methyl-2-oxobutanoate + (6R)-5,10-methylene-5,6,7,8-tetrahydrofolate + H2O = 2-dehydropantoate + (6S)-5,6,7,8-tetrahydrofolate. Its pathway is cofactor biosynthesis; (R)-pantothenate biosynthesis; (R)-pantoate from 3-methyl-2-oxobutanoate: step 1/2. Its function is as follows. Catalyzes the reversible reaction in which hydroxymethyl group from 5,10-methylenetetrahydrofolate is transferred onto alpha-ketoisovalerate to form ketopantoate. This chain is 3-methyl-2-oxobutanoate hydroxymethyltransferase, found in Frankia casuarinae (strain DSM 45818 / CECT 9043 / HFP020203 / CcI3).